A 169-amino-acid chain; its full sequence is UPF0725 protein At2g19200 (169 aa).

It belongs to the UPF0725 (EMB2204) family.

The protein is UPF0725 protein At2g19200 of Arabidopsis thaliana (Mouse-ear cress).